Consider the following 353-residue polypeptide: Quinolinate synthase (353 aa).

Iminosuccinate contacts are provided by H47 and S68. A [4Fe-4S] cluster-binding site is contributed by C113. Residues 139–141 and S156 each bind iminosuccinate; that span reads YAN. A [4Fe-4S] cluster-binding site is contributed by C200. Iminosuccinate is bound by residues 226-228 and T243; that span reads HPE. Residue C297 participates in [4Fe-4S] cluster binding.

It belongs to the quinolinate synthase family. Type 1 subfamily. The cofactor is [4Fe-4S] cluster.

The protein localises to the cytoplasm. It catalyses the reaction iminosuccinate + dihydroxyacetone phosphate = quinolinate + phosphate + 2 H2O + H(+). Its pathway is cofactor biosynthesis; NAD(+) biosynthesis; quinolinate from iminoaspartate: step 1/1. Its function is as follows. Catalyzes the condensation of iminoaspartate with dihydroxyacetone phosphate to form quinolinate. The polypeptide is Quinolinate synthase (Pectobacterium atrosepticum (strain SCRI 1043 / ATCC BAA-672) (Erwinia carotovora subsp. atroseptica)).